We begin with the raw amino-acid sequence, 914 residues long: Ubiquitin carboxyl-terminal hydrolase 20 (914 aa).

The segment at 6–111 adopts a UBP-type zinc-finger fold; it reads DLCPHLDSIG…GSSSKFSEQD (106 aa). Residues Cys-8, His-10, Cys-30, Cys-33, Cys-43, Cys-48, Cys-53, His-60, His-64, His-70, Cys-83, and Cys-86 each contribute to the Zn(2+) site. Ser-112, Ser-132, and Ser-134 each carry phosphoserine. The 541-residue stretch at 145-685 folds into the USP domain; the sequence is TGMKNLGNSC…EGYVLFYRKS (541 aa). The active-site Nucleophile is the Cys-154. 2 disordered regions span residues 257–347 and 360–415; these read LTEA…VDED and QPAE…ASPV. Thr-258 carries the post-translational modification Phosphothreonine. A compositionally biased stretch (basic and acidic residues) spans 259-279; that stretch reads EARDSDSSDTDEKREGDRSPS. At Ser-305 the chain carries Phosphoserine. The span at 316 to 332 shows a compositional bias: basic and acidic residues; sequence EAGRAISEKERMKDRKF. Ser-368 bears the Phosphoserine mark. Thr-377 bears the Phosphothreonine mark. Ser-408 and Ser-413 each carry phosphoserine. His-643 (proton acceptor) is an active-site residue. 2 DUSP domains span residues 687–780 and 789–892; these read EEAM…LYVC and ALAK…RQSV.

Belongs to the peptidase C19 family. USP20/USP33 subfamily. In terms of assembly, interacts with VHL, leading to its ubiquitination and subsequent degradation. Interacts with CCP110. Interacts with DIO2. Interacts with HIF1A. Interacts with ADRB2. Interacts with USP18. Post-translationally, ubiquitinated via a VHL-dependent pathway for proteasomal degradation.

The protein resides in the cytoplasm. Its subcellular location is the endoplasmic reticulum. It localises to the perinuclear region. It is found in the cytoskeleton. The protein localises to the microtubule organizing center. The protein resides in the centrosome. It carries out the reaction Thiol-dependent hydrolysis of ester, thioester, amide, peptide and isopeptide bonds formed by the C-terminal Gly of ubiquitin (a 76-residue protein attached to proteins as an intracellular targeting signal).. Functionally, deubiquitinating enzyme that plays a role in many cellular processes including autophagy, cellular antiviral response or membrane protein biogenesis. Attenuates TLR4-mediated NF-kappa-B signaling by cooperating with beta-arrestin-2/ARRB2 and inhibiting TRAF6 autoubiquitination. Promotes cellular antiviral responses by deconjugating 'Lys-33' and 'Lys-48'-linked ubiquitination of STING1 leading to its stabilization. Plays an essential role in autophagy induction by regulating the ULK1 stability through deubiquitination of ULK1. Acts as a positive regulator for NF-kappa-B activation by TNF-alpha through deubiquitinating 'Lys-48'-linked polyubiquitination of SQSTM1, leading to its increased stability. Acts as a regulator of G-protein coupled receptor (GPCR) signaling by mediating the deubiquitination beta-2 adrenergic receptor (ADRB2). Plays a central role in ADRB2 recycling and resensitization after prolonged agonist stimulation by constitutively binding ADRB2, mediating deubiquitination of ADRB2 and inhibiting lysosomal trafficking of ADRB2. Upon dissociation, it is probably transferred to the translocated beta-arrestins, possibly leading to beta-arrestins deubiquitination and disengagement from ADRB2. This suggests the existence of a dynamic exchange between the ADRB2 and beta-arrestins. Deubiquitinates DIO2, thereby regulating thyroid hormone regulation. Deubiquitinates HIF1A, leading to stabilize HIF1A and enhance HIF1A-mediated activity. Deubiquitinates MCL1, a pivotal member of the anti-apoptotic Bcl-2 protein family to regulate its stability. Within the endoplasmic reticulum, participates with USP33 in the rescue of post-translationally targeted membrane proteins that are inappropriately ubiquitinated by the cytosolic protein quality control in the cytosol. The polypeptide is Ubiquitin carboxyl-terminal hydrolase 20 (USP20) (Homo sapiens (Human)).